A 184-amino-acid chain; its full sequence is Inactive cytochrome P450 monooxygenase lolP2 (184 aa).

A helical transmembrane segment spans residues 10 to 30 (GIVWLTVAAIAISYILQSSFL). Residues 161–184 (RRTRGSRPRSRPRWMPARWSRSSP) are disordered. Residues 163 to 172 (TRGSRPRSRP) show a composition bias toward basic residues. Residues 173-184 (RWMPARWSRSSP) show a composition bias toward low complexity.

The protein belongs to the cytochrome P450 family.

It is found in the membrane. In terms of biological role, cytochrome P450 monooxygenase; part of the gene cluster that mediates the biosynthesis of loline alkaloids, potent insecticidal agents composed of a pyrrolizidine ring system and an uncommon ether bridge linking carbons 2 and 7. Lolines are structurally differentiated by the various modifications of the L-amino group and include norloline, loline, N-methylloline, N-acetylloline, N-acetylnorloline, and N-formylloline. The first committed step is the condensation of O-acetyl-L-homoserine (derived from L-aspartic acid) and L-proline, probably catalyzed by the gamma-type pyridoxal 5'-phosphate(PLP)-dependent enzyme lolC, to give the diamino diacid, NACPP. Ensuing cyclization, decarboxylation, and acetylation steps yield 1-exo-acetamidopyrrolizidine (AcAP). LolO is required for installation of the ether bridge upon the pathway intermediate, 1-exo-acetamidopyrrolizidine (AcAP). In sequential 2-oxoglutarate- and O(2)-consuming steps, lolO removes hydrogens from C2 and C7 of AcAP to form both carbon-oxygen bonds in N-acetylnorloline (NANL), the precursor to all other lolines. The enzymes lolD, lolE, lolF and lolT have also been proposed to be involved in the ether-bridge installation. Further processing of the exocyclic moiety of NANL by fungal N-acetamidase (LolN), methyltransferase (LolM), and cytochrome P450 (LolP) enzymes, with occasional involvement of a plant acetyltransferase, generates the other known lolines. LolN transforms NANL to norlonine which is monomethylated and dimethylated to respectively lonine and N-methyllonine (NML) by lolM. LolP catalyzes hydroxylation of the methyl group in N-methylloline (NML) and further oxygenation to N-formylloline (NFL). A plant acetyltransferase is responsible for the acetylation of loline to form N-acetylloline (NAL). LolA might interact with aspartate kinase to prevent feedback inhibition of its activity by these end products and thereby promote production of L-homoserine from L-aspartate. The chain is Inactive cytochrome P450 monooxygenase lolP2 from Epichloe uncinata (Endophyte fungus).